Reading from the N-terminus, the 375-residue chain is Succinyl-diaminopimelate desuccinylase (375 aa).

His-66 is a Zn(2+) binding site. Asp-68 is an active-site residue. Residue Asp-99 coordinates Zn(2+). The active-site Proton acceptor is the Glu-133. Glu-134, Glu-162, and His-348 together coordinate Zn(2+).

This sequence belongs to the peptidase M20A family. DapE subfamily. As to quaternary structure, homodimer. Zn(2+) serves as cofactor. Requires Co(2+) as cofactor.

The catalysed reaction is N-succinyl-(2S,6S)-2,6-diaminopimelate + H2O = (2S,6S)-2,6-diaminopimelate + succinate. It functions in the pathway amino-acid biosynthesis; L-lysine biosynthesis via DAP pathway; LL-2,6-diaminopimelate from (S)-tetrahydrodipicolinate (succinylase route): step 3/3. Catalyzes the hydrolysis of N-succinyl-L,L-diaminopimelic acid (SDAP), forming succinate and LL-2,6-diaminopimelate (DAP), an intermediate involved in the bacterial biosynthesis of lysine and meso-diaminopimelic acid, an essential component of bacterial cell walls. This chain is Succinyl-diaminopimelate desuccinylase, found in Herminiimonas arsenicoxydans.